The following is a 214-amino-acid chain: Osteoclast-stimulating factor 1 (214 aa).

Ser2 bears the N-acetylserine mark. Residues 12 to 71 (GQVKVFRALYTFEPRTPDELYFEEGDIIYITDMSDTNWWKGTSKGRTGLIPSNYVAEQAE) form the SH3 domain. ANK repeat units lie at residues 72–101 (SIDN…GVNG), 105–135 (AGST…ELNQ), and 139–168 (LGDT…RTDL). Thr200 carries the post-translational modification Phosphothreonine. Residues Ser202 and Ser213 each carry the phosphoserine modification.

As to quaternary structure, interacts with SRC and SMN1. Interacts with FASLG.

It localises to the cytoplasm. In terms of biological role, induces bone resorption, acting probably through a signaling cascade which results in the secretion of factor(s) enhancing osteoclast formation and activity. In Sus scrofa (Pig), this protein is Osteoclast-stimulating factor 1 (OSTF1).